The primary structure comprises 3930 residues: Hybrid PKS-NRPS synthetase apdA (3930 aa).

Residues 2–440 (QDLIAIVGSA…GTNAHAIIEG (439 aa)) enclose the Ketosynthase family 3 (KS3) domain. Catalysis depends on for beta-ketoacyl synthase activity residues Cys176, His313, and His361. A malonyl-CoA:ACP transacylase (MAT) domain region spans residues 557 to 879 (IFTGQGAQWA…MRRGDNEIEA (323 aa)). An N-terminal hotdog fold region spans residues 948–1085 (HELLGRRVPD…GRLIINYGDP (138 aa)). The dehydratase (DH) domain stretch occupies residues 948–1251 (HELLGRRVPD…SMKSMSEPQP (304 aa)). Positions 948-1252 (HELLGRRVPD…MKSMSEPQPE (305 aa)) constitute a PKS/mFAS DH domain. The active-site Proton acceptor; for dehydratase activity is His980. Positions 1100-1252 (NVPVDMGRFY…MKSMSEPQPE (153 aa)) are C-terminal hotdog fold. Asp1159 acts as the Proton donor; for dehydratase activity in catalysis. The interval 1389–1588 (QDDMLNRFYM…FSGLDCLAPD (200 aa)) is methyltransferase (MT) domain. A ketoreductase (KR) domain region spans residues 2088 to 2229 (ATYLLAGMTG…SLASIIGNAA (142 aa)). Residues 2326 to 2403 (AVIPIVQEAF…QICEDAVRQF (78 aa)) form the Carrier 1 domain. Ser2363 carries the post-translational modification O-(pantetheine 4'-phosphoryl)serine. Disordered regions lie at residues 2414 to 2433 (VAPN…SNAT) and 2444 to 2494 (DAAN…VDAD). A compositionally biased stretch (low complexity) spans 2445-2473 (AANGDYESSSQGDDSRGNSSSSSSHTSPS). Residues 2509 to 2937 (PASFAQSRLW…SLPVNQLPVT (429 aa)) are condensation (C) domain. The segment at 2971 to 3371 (KSFPEETAIK…GTLIFMGRMD (401 aa)) is adenylation (A) (KR) domain. Residues 2971–3371 (KSFPEETAIK…GTLIFMGRMD (401 aa)) are reductase (RED) domain. Residues 3493 to 3572 (RHLSLAEGEL…QMARRISRRK (80 aa)) form the Carrier 2 domain. Ser3532 bears the O-(pantetheine 4'-phosphoryl)serine mark.

This sequence in the C-terminal section; belongs to the NRP synthetase family.

Its pathway is secondary metabolite biosynthesis. Functionally, hybrid PKS-NRPS synthetase; part of the gene cluster that mediates the biosynthesis of aspyridones. The polyketide-amino acid backbone preaspyridone A is first assembled by the PKS-NRPS hybrid apdA. The assembly of preaspyridone A is initiated by loading of malonyl-CoA onto apdA, followed by decarboxylation to yield the acetyl starter unit. The growing polyketide chain then elongates into a tetraketide. The adpA PKS module catalyzes three Claisen condensations, as well as beta-keto processing and methylation. Alpha-methylation step during polyketide synthesis is a prerequisite and a key checkpoint for chain transfer between PKS and NRPS modules. The downstream NRPS module contains the condensation (C), adenylation (A), and thiolation (T) domains and catalyzes the incorporation of tyrosine via the formation of the L-tyrosinyl-thioester and the amide linkage between L-tyrosinyl-thioester and the tetraketide. The bimodular assembly line is terminated with a reductase (R) domain that facilitates formation and release of the tetramic acid product. Because apdA lacks a designated enoylreductase (ER) domain, the required activity is provided the enoyl reductase apdC. ApdC appears to operate with different stereoselectivity in different PKS cycle. Combined with apdC, apdA is proposed to synthesize preaspyridone A via about 20 enzymatic steps. A number of oxidative steps performed successively by the cytochrome P450 monooxygenases apdE and apdB are required for the conversion of preaspyridone A to aspyridone A. The cytochrome P450 monooxygenase apdE is responsible for the oxidative dephenylation of preaspyridone A. Finally, the predicted FAD-dependent monooxygenase apdD and the acyl-CoA dehydrogenase apdG may be involved in the transformation of aspyridone A into aspyridone B. This Emericella nidulans (strain FGSC A4 / ATCC 38163 / CBS 112.46 / NRRL 194 / M139) (Aspergillus nidulans) protein is Hybrid PKS-NRPS synthetase apdA.